A 1634-amino-acid polypeptide reads, in one-letter code: Protein TIC 214 (1634 aa).

The next 5 helical transmembrane spans lie at 25–45, 53–73, 94–116, 133–153, and 172–192; these read FIIG…YVAL, ILAL…SFFA, HFIL…LITI, FAWF…LVWI, and IFVI…SIQC. Disordered regions lie at residues 216 to 242 and 1365 to 1395; these read RERL…SESE and QQKS…STKS. The segment covering 1386–1395 has biased composition (basic and acidic residues); that stretch reads KYLEEDSTKS.

It belongs to the TIC214 family. Part of the Tic complex.

The protein localises to the plastid. It localises to the chloroplast inner membrane. Functionally, involved in protein precursor import into chloroplasts. May be part of an intermediate translocation complex acting as a protein-conducting channel at the inner envelope. This chain is Protein TIC 214, found in Cuscuta exaltata (Tall dodder).